The primary structure comprises 553 residues: Hydroxylamine reductase (553 aa).

[2Fe-2S] cluster contacts are provided by Cys-3, Cys-6, Cys-18, and Cys-25. The hybrid [4Fe-2O-2S] cluster site is built by His-252, Glu-276, Cys-320, Cys-408, Cys-436, Cys-461, Glu-495, and Lys-497. Position 408 is a cysteine persulfide (Cys-408).

It belongs to the HCP family. [2Fe-2S] cluster is required as a cofactor. Hybrid [4Fe-2O-2S] cluster serves as cofactor.

The protein localises to the cytoplasm. The enzyme catalyses A + NH4(+) + H2O = hydroxylamine + AH2 + H(+). In terms of biological role, catalyzes the reduction of hydroxylamine to form NH(3) and H(2)O. The sequence is that of Hydroxylamine reductase from Vibrio vulnificus (strain YJ016).